Here is a 562-residue protein sequence, read N- to C-terminus: Urease subunit alpha (562 aa).

The Urease domain maps to 131 to 562; it reads GGMDCHIHFI…LPMAQRYFLF (432 aa). Positions 136, 138, and 219 each coordinate Ni(2+). Lys-219 carries the N6-carboxylysine modification. Substrate is bound at residue His-221. Ni(2+) is bound by residues His-248 and His-274. His-322 functions as the Proton donor in the catalytic mechanism. Position 362 (Asp-362) interacts with Ni(2+).

Belongs to the metallo-dependent hydrolases superfamily. Urease alpha subunit family. In terms of assembly, heterotrimer of UreA (gamma), UreB (beta) and UreC (alpha) subunits. Three heterotrimers associate to form the active enzyme. The cofactor is Ni cation. Carboxylation allows a single lysine to coordinate two nickel ions.

It localises to the cytoplasm. The enzyme catalyses urea + 2 H2O + H(+) = hydrogencarbonate + 2 NH4(+). It functions in the pathway nitrogen metabolism; urea degradation; CO(2) and NH(3) from urea (urease route): step 1/1. This is Urease subunit alpha from Paracoccus denitrificans (strain Pd 1222).